Reading from the N-terminus, the 1303-residue chain is Ninein-like protein (1303 aa).

EF-hand domains lie at arginine 8–aspartate 43 and arginine 61–arginine 77. The interval threonine 107–aspartate 135 is disordered. EF-hand domains are found at residues valine 203–lysine 238 and leucine 240–histidine 275. Positions 253, 255, 257, 259, and 264 each coordinate Ca(2+). Residues glutamate 464–glutamine 590 adopt a coiled-coil conformation. Positions serine 592–glutamate 617 are enriched in polar residues. Positions serine 592–arginine 634 are disordered. 3 coiled-coil regions span residues glutamate 660 to glutamate 791, leucine 821 to arginine 876, and serine 919 to glutamine 1146. A disordered region spans residues glutamate 1156–glutamine 1181. Residues glycine 1159–glutamate 1175 are compositionally biased toward polar residues. A coiled-coil region spans residues glutamine 1202–lysine 1278.

Its subcellular location is the cytoplasm. It is found in the cytoskeleton. The protein localises to the microtubule organizing center. The protein resides in the centrosome. Required for the intracellular transport of organelles and vesicles, and is essential for the photoreceptor's outer segments formation, maintenance and function. This Danio rerio (Zebrafish) protein is Ninein-like protein (Ninl).